The sequence spans 302 residues: NAD kinase 2 (302 aa).

Residue D79 is the Proton acceptor of the active site. NAD(+) contacts are provided by residues D79 to G80, N153 to E154, D183, T194 to S199, A218, and N252.

The protein belongs to the NAD kinase family. A divalent metal cation is required as a cofactor.

The protein localises to the cytoplasm. The enzyme catalyses NAD(+) + ATP = ADP + NADP(+) + H(+). Its function is as follows. Involved in the regulation of the intracellular balance of NAD and NADP, and is a key enzyme in the biosynthesis of NADP. Catalyzes specifically the phosphorylation on 2'-hydroxyl of the adenosine moiety of NAD to yield NADP. This is NAD kinase 2 from Prochlorococcus marinus subsp. pastoris (strain CCMP1986 / NIES-2087 / MED4).